The sequence spans 227 residues: Enolase-phosphatase E1 (227 aa).

It belongs to the HAD-like hydrolase superfamily. MasA/MtnC family. In terms of assembly, monomer. The cofactor is Mg(2+).

The catalysed reaction is 5-methylsulfanyl-2,3-dioxopentyl phosphate + H2O = 1,2-dihydroxy-5-(methylsulfanyl)pent-1-en-3-one + phosphate. Its pathway is amino-acid biosynthesis; L-methionine biosynthesis via salvage pathway; L-methionine from S-methyl-5-thio-alpha-D-ribose 1-phosphate: step 3/6. It participates in amino-acid biosynthesis; L-methionine biosynthesis via salvage pathway; L-methionine from S-methyl-5-thio-alpha-D-ribose 1-phosphate: step 4/6. Functionally, bifunctional enzyme that catalyzes the enolization of 2,3-diketo-5-methylthiopentyl-1-phosphate (DK-MTP-1-P) into the intermediate 2-hydroxy-3-keto-5-methylthiopentenyl-1-phosphate (HK-MTPenyl-1-P), which is then dephosphorylated to form the acireductone 1,2-dihydroxy-3-keto-5-methylthiopentene (DHK-MTPene). This Pseudomonas syringae pv. tomato (strain ATCC BAA-871 / DC3000) protein is Enolase-phosphatase E1.